The chain runs to 249 residues: Type III pantothenate kinase (249 aa).

Asp-6 to Lys-13 is a binding site for ATP. Substrate-binding positions include Tyr-93 and Gly-100–Arg-103. Residue Asp-102 is the Proton acceptor of the active site. Asp-122 lines the K(+) pocket. ATP is bound at residue Thr-125. Thr-181 contacts substrate.

It belongs to the type III pantothenate kinase family. Homodimer. Requires NH4(+) as cofactor. K(+) is required as a cofactor.

The protein resides in the cytoplasm. It carries out the reaction (R)-pantothenate + ATP = (R)-4'-phosphopantothenate + ADP + H(+). It functions in the pathway cofactor biosynthesis; coenzyme A biosynthesis; CoA from (R)-pantothenate: step 1/5. Functionally, catalyzes the phosphorylation of pantothenate (Pan), the first step in CoA biosynthesis. The sequence is that of Type III pantothenate kinase from Pseudomonas putida (strain W619).